The following is an 84-amino-acid chain: M-myrmeciitoxin-Mb2a (84 aa).

The first 21 residues, 1 to 21 (MKLSCLLLTLAIIFVLTIVHA), serve as a signal peptide directing secretion. The propeptide occupies 22–48 (PNVKAKALADPESDAVGFADAVGEADP).

It belongs to the formicidae venom precursor-01 superfamily. Ant pilosulin family. In terms of tissue distribution, expressed by the venom gland.

It is found in the secreted. Functionally, shows activity against E.coli and S.aureus (MIC&lt;6.25 uM), moderate activity against P.aeruginosa (MIC&lt;25 uM), weak activity against B.subtilis (MIC&lt;50 uM), and has no effect against L.garvieae, C.albicans, and S.cerevisiae. Has no hemolytic nor cytolytic activity. Causes an IgE-independent histamine release. In Myrmecia banksi (Jack jumper ant), this protein is M-myrmeciitoxin-Mb2a.